A 60-amino-acid chain; its full sequence is Colanic acid capsular biosynthesis activation protein B (60 aa).

The protein is Colanic acid capsular biosynthesis activation protein B (rcsB) of Klebsiella aerogenes (Enterobacter aerogenes).